Here is a 281-residue protein sequence, read N- to C-terminus: Ribosomal RNA small subunit methyltransferase A (281 aa).

6 residues coordinate S-adenosyl-L-methionine: His25, Leu27, Gly52, Glu74, Asp100, and Asn119.

This sequence belongs to the class I-like SAM-binding methyltransferase superfamily. rRNA adenine N(6)-methyltransferase family. RsmA subfamily.

The protein resides in the cytoplasm. It catalyses the reaction adenosine(1518)/adenosine(1519) in 16S rRNA + 4 S-adenosyl-L-methionine = N(6)-dimethyladenosine(1518)/N(6)-dimethyladenosine(1519) in 16S rRNA + 4 S-adenosyl-L-homocysteine + 4 H(+). Functionally, specifically dimethylates two adjacent adenosines (A1518 and A1519) in the loop of a conserved hairpin near the 3'-end of 16S rRNA in the 30S particle. May play a critical role in biogenesis of 30S subunits. The polypeptide is Ribosomal RNA small subunit methyltransferase A (Paramagnetospirillum magneticum (strain ATCC 700264 / AMB-1) (Magnetospirillum magneticum)).